A 334-amino-acid chain; its full sequence is Ornithine carbamoyltransferase, catabolic (334 aa).

Residues Ser-57–Thr-60, Gln-84, Arg-108, and His-135–Gln-138 each bind carbamoyl phosphate. Residues Asn-168, Asp-232, and Ser-236–Met-237 contribute to the L-ornithine site. Carbamoyl phosphate contacts are provided by residues Cys-274–Leu-275 and Arg-321.

It belongs to the aspartate/ornithine carbamoyltransferase superfamily. OTCase family.

Its subcellular location is the cytoplasm. The catalysed reaction is carbamoyl phosphate + L-ornithine = L-citrulline + phosphate + H(+). It functions in the pathway amino-acid degradation; L-arginine degradation via ADI pathway; carbamoyl phosphate from L-arginine: step 2/2. In terms of biological role, reversibly catalyzes the transfer of the carbamoyl group from carbamoyl phosphate (CP) to the N(epsilon) atom of ornithine (ORN) to produce L-citrulline. The sequence is that of Ornithine carbamoyltransferase, catabolic (arcB) from Avibacterium paragallinarum (Haemophilus gallinarum).